The sequence spans 237 residues: Small ribosomal subunit protein eS4 (237 aa).

Positions I37–P100 constitute an S4 RNA-binding domain.

It belongs to the eukaryotic ribosomal protein eS4 family.

In Caldivirga maquilingensis (strain ATCC 700844 / DSM 13496 / JCM 10307 / IC-167), this protein is Small ribosomal subunit protein eS4.